We begin with the raw amino-acid sequence, 388 residues long: Chorismate synthase (388 aa).

2 residues coordinate NADP(+): Arg39 and Arg45. FMN-binding positions include 132–134 (RSS), 251–252 (NA), Gly296, 311–315 (KPIPT), and Arg337.

In terms of assembly, homotetramer. Requires FMNH2 as cofactor.

It carries out the reaction 5-O-(1-carboxyvinyl)-3-phosphoshikimate = chorismate + phosphate. The protein operates within metabolic intermediate biosynthesis; chorismate biosynthesis; chorismate from D-erythrose 4-phosphate and phosphoenolpyruvate: step 7/7. In terms of biological role, catalyzes the anti-1,4-elimination of the C-3 phosphate and the C-6 proR hydrogen from 5-enolpyruvylshikimate-3-phosphate (EPSP) to yield chorismate, which is the branch point compound that serves as the starting substrate for the three terminal pathways of aromatic amino acid biosynthesis. This reaction introduces a second double bond into the aromatic ring system. The sequence is that of Chorismate synthase from Staphylococcus aureus.